Here is a 594-residue protein sequence, read N- to C-terminus: Arginine--tRNA ligase (594 aa).

Positions 139-149 (ANPTGPLHVGH) match the 'HIGH' region motif.

Belongs to the class-I aminoacyl-tRNA synthetase family. As to quaternary structure, monomer.

It localises to the cytoplasm. The catalysed reaction is tRNA(Arg) + L-arginine + ATP = L-arginyl-tRNA(Arg) + AMP + diphosphate. The polypeptide is Arginine--tRNA ligase (Burkholderia mallei (strain NCTC 10247)).